The chain runs to 149 residues: Arginine repressor (149 aa).

This sequence belongs to the ArgR family.

It is found in the cytoplasm. It functions in the pathway amino-acid biosynthesis; L-arginine biosynthesis [regulation]. Its function is as follows. Regulates arginine biosynthesis genes. The chain is Arginine repressor from Shouchella clausii (strain KSM-K16) (Alkalihalobacillus clausii).